The primary structure comprises 512 residues: GMP synthase [glutamine-hydrolyzing] (512 aa).

One can recognise a Glutamine amidotransferase type-1 domain in the interval 6-195 (KIIILDFGSQ…VFNICGCQPK (190 aa)). C83 serves as the catalytic Nucleophile. Residues H169 and E171 contribute to the active site. The GMPS ATP-PPase domain occupies 196-387 (WKITEFISAA…LGIDFKFVYK (192 aa)). An ATP-binding site is contributed by 223 to 229 (SGGVDSS).

Homodimer.

The catalysed reaction is XMP + L-glutamine + ATP + H2O = GMP + L-glutamate + AMP + diphosphate + 2 H(+). It participates in purine metabolism; GMP biosynthesis; GMP from XMP (L-Gln route): step 1/1. Functionally, catalyzes the synthesis of GMP from XMP. The polypeptide is GMP synthase [glutamine-hydrolyzing] (Spiroplasma kunkelii).